We begin with the raw amino-acid sequence, 236 residues long: Uridylate kinase (236 aa).

10-13 is a binding site for ATP; it reads KLSG. Position 52 (G52) interacts with UMP. ATP is bound by residues G53 and R57. UMP contacts are provided by residues D72 and 133–140; that span reads TGNPFFTT. ATP is bound by residues T160, Y166, and D169.

It belongs to the UMP kinase family. Homohexamer.

The protein resides in the cytoplasm. It carries out the reaction UMP + ATP = UDP + ADP. It functions in the pathway pyrimidine metabolism; CTP biosynthesis via de novo pathway; UDP from UMP (UMPK route): step 1/1. Inhibited by UTP. Its function is as follows. Catalyzes the reversible phosphorylation of UMP to UDP. The protein is Uridylate kinase of Bacteroides fragilis (strain ATCC 25285 / DSM 2151 / CCUG 4856 / JCM 11019 / LMG 10263 / NCTC 9343 / Onslow / VPI 2553 / EN-2).